Here is a 233-residue protein sequence, read N- to C-terminus: MKPVYRCRVCSAYTEEPVHCGRPAEPLMTGEQRLRLSKLMTTLLRHLPHEAGLRLDPQGWVGIDELVRGIRERWRNRHLYQWVTRDHVIAVALLDPKGRFQLDLARGRIRAAYGHTVRVELGYRPLSMDELPDKLYHGTVAENLASILSEGLKPMRRLMVHMTTDYSSAVETGRRHGPNVVVLVIDPRCLAKHGIPVYRASDTIYLAPSVPPNCITGKIARNPQSARKTYLHA.

It belongs to the KptA/TPT1 family.

Its function is as follows. Removes the 2'-phosphate from RNA via an intermediate in which the phosphate is ADP-ribosylated by NAD followed by a presumed transesterification to release the RNA and generate ADP-ribose 1''-2''-cyclic phosphate (APPR&gt;P). May function as an ADP-ribosylase. This Hyperthermus butylicus (strain DSM 5456 / JCM 9403 / PLM1-5) protein is Probable RNA 2'-phosphotransferase.